The following is a 130-amino-acid chain: Protein ApaG (130 aa).

The ApaG domain maps to 3-127 (RALTRDIEVT…FSLDSPGLVR (125 aa)).

The protein is Protein ApaG of Sinorhizobium fredii (strain NBRC 101917 / NGR234).